Reading from the N-terminus, the 251-residue chain is 3-deoxy-manno-octulosonate cytidylyltransferase (251 aa).

This sequence belongs to the KdsB family.

The protein resides in the cytoplasm. It catalyses the reaction 3-deoxy-alpha-D-manno-oct-2-ulosonate + CTP = CMP-3-deoxy-beta-D-manno-octulosonate + diphosphate. It participates in nucleotide-sugar biosynthesis; CMP-3-deoxy-D-manno-octulosonate biosynthesis; CMP-3-deoxy-D-manno-octulosonate from 3-deoxy-D-manno-octulosonate and CTP: step 1/1. It functions in the pathway bacterial outer membrane biogenesis; lipopolysaccharide biosynthesis. Its function is as follows. Activates KDO (a required 8-carbon sugar) for incorporation into bacterial lipopolysaccharide in Gram-negative bacteria. The polypeptide is 3-deoxy-manno-octulosonate cytidylyltransferase (Vibrio parahaemolyticus serotype O3:K6 (strain RIMD 2210633)).